Reading from the N-terminus, the 560-residue chain is Thermosome subunit 1 (560 aa).

Residues 525–550 (LSGGQTGSDDDDGGAPGGMGGGMGGM) are disordered. Residues 538–550 (GAPGGMGGGMGGM) show a composition bias toward gly residues.

Belongs to the TCP-1 chaperonin family. As to quaternary structure, the thermosome or CCT complex is a oligomeric complex of two octameric double-ring structures; the complex is probably a heterooligomer of CCT1, CCT2 and CCT3 with yet unknown stoichiometry.

Its function is as follows. Molecular chaperone that assists in the folding or refolding of nascent or denatured proteins along with ATP hydrolysis. ATPase activity is highest in thermosome assemblies containing CCT1:CCT2, followed by assemblies containing CCT1:CCT2:CCT3. Required for thermosome ATPase activity. Not required for growth. In Haloferax volcanii (strain ATCC 29605 / DSM 3757 / JCM 8879 / NBRC 14742 / NCIMB 2012 / VKM B-1768 / DS2) (Halobacterium volcanii), this protein is Thermosome subunit 1 (cct1).